The following is a 456-amino-acid chain: Cysteine--tRNA ligase (456 aa).

Position 30 (Cys-30) interacts with Zn(2+). Positions 32-42 match the 'HIGH' region motif; the sequence is MTVYDFCHIGH. Positions 211, 236, and 240 each coordinate Zn(2+). The 'KMSKS' region motif lies at 268 to 272; the sequence is KMSKS. Lys-271 is an ATP binding site.

Belongs to the class-I aminoacyl-tRNA synthetase family. In terms of assembly, monomer. The cofactor is Zn(2+).

The protein localises to the cytoplasm. It carries out the reaction tRNA(Cys) + L-cysteine + ATP = L-cysteinyl-tRNA(Cys) + AMP + diphosphate. The chain is Cysteine--tRNA ligase from Dichelobacter nodosus (strain VCS1703A).